A 211-amino-acid polypeptide reads, in one-letter code: ATP phosphoribosyltransferase (211 aa).

Belongs to the ATP phosphoribosyltransferase family. Short subfamily. In terms of assembly, heteromultimer composed of HisG and HisZ subunits.

The protein resides in the cytoplasm. It carries out the reaction 1-(5-phospho-beta-D-ribosyl)-ATP + diphosphate = 5-phospho-alpha-D-ribose 1-diphosphate + ATP. Its pathway is amino-acid biosynthesis; L-histidine biosynthesis; L-histidine from 5-phospho-alpha-D-ribose 1-diphosphate: step 1/9. Catalyzes the condensation of ATP and 5-phosphoribose 1-diphosphate to form N'-(5'-phosphoribosyl)-ATP (PR-ATP). Has a crucial role in the pathway because the rate of histidine biosynthesis seems to be controlled primarily by regulation of HisG enzymatic activity. This Bacillus cereus (strain ATCC 14579 / DSM 31 / CCUG 7414 / JCM 2152 / NBRC 15305 / NCIMB 9373 / NCTC 2599 / NRRL B-3711) protein is ATP phosphoribosyltransferase.